We begin with the raw amino-acid sequence, 309 residues long: tRNA pseudouridine synthase B (309 aa).

D51 functions as the Nucleophile in the catalytic mechanism.

It belongs to the pseudouridine synthase TruB family. Type 1 subfamily.

The catalysed reaction is uridine(55) in tRNA = pseudouridine(55) in tRNA. In terms of biological role, responsible for synthesis of pseudouridine from uracil-55 in the psi GC loop of transfer RNAs. The polypeptide is tRNA pseudouridine synthase B (Coxiella burnetii (strain RSA 331 / Henzerling II)).